A 283-amino-acid chain; its full sequence is Phosphatidylglycerol--prolipoprotein diacylglyceryl transferase (283 aa).

Transmembrane regions (helical) follow at residues leucine 17–glycine 37, phenylalanine 56–tyrosine 76, tryptophan 92–phenylalanine 112, and glycine 117–serine 137. A 1,2-diacyl-sn-glycero-3-phospho-(1'-sn-glycerol) is bound at residue arginine 139. The next 3 helical transmembrane spans lie at proline 194 to phenylalanine 214, glycine 222 to alanine 242, and glycine 255 to valine 275.

This sequence belongs to the Lgt family.

It is found in the cell inner membrane. It catalyses the reaction L-cysteinyl-[prolipoprotein] + a 1,2-diacyl-sn-glycero-3-phospho-(1'-sn-glycerol) = an S-1,2-diacyl-sn-glyceryl-L-cysteinyl-[prolipoprotein] + sn-glycerol 1-phosphate + H(+). Its pathway is protein modification; lipoprotein biosynthesis (diacylglyceryl transfer). Its function is as follows. Catalyzes the transfer of the diacylglyceryl group from phosphatidylglycerol to the sulfhydryl group of the N-terminal cysteine of a prolipoprotein, the first step in the formation of mature lipoproteins. The protein is Phosphatidylglycerol--prolipoprotein diacylglyceryl transferase of Neisseria meningitidis serogroup C / serotype 2a (strain ATCC 700532 / DSM 15464 / FAM18).